Here is a 114-residue protein sequence, read N- to C-terminus: Photosystem II reaction center Psb28 protein (114 aa).

This sequence belongs to the Psb28 family. In terms of assembly, part of the photosystem II complex.

It is found in the plastid. Its subcellular location is the chloroplast thylakoid membrane. The chain is Photosystem II reaction center Psb28 protein from Thalassiosira pseudonana (Marine diatom).